The following is a 104-amino-acid chain: Vesicle-associated membrane protein 3 (104 aa).

Residues 1 to 23 (MTTNAPAGSSAAAGSSRRLQQTQ) form a disordered region. Over 1–81 (MTTNAPAGSS…KRKYWWKNCK (81 aa)) the chain is Cytoplasmic. Residues 7-16 (AGSSAAAGSS) are compositionally biased toward low complexity. The 61-residue stretch at 18–78 (RLQQTQNQVD…AKLKRKYWWK (61 aa)) folds into the v-SNARE coiled-coil homology domain. Glycyl lysine isopeptide (Lys-Gly) (interchain with G-Cter in ubiquitin) cross-links involve residues Lys70, Lys72, and Lys81. Residues 82–102 (MWAIGITVVVIIIIIIVVWSI) traverse the membrane as a helical; Anchor for type IV membrane protein segment. Residues 103-104 (SS) lie on the Vesicular side of the membrane.

This sequence belongs to the synaptobrevin family. In terms of assembly, interacts with POPDC1 (via the C-terminus cytoplasmic tail). Interacts with BCAP31; involved in VAMP3 export from the endoplasmic reticulum. Interacts with BAIAP3; this interaction is increased in the presence of calcium. Interacts with PICALM. In terms of processing, ubiquitinated by RNF167 at Lys-70, Lys-72 and Lys-81, regulating the recycling endosome pathway.

Its subcellular location is the early endosome membrane. The protein localises to the recycling endosome membrane. It is found in the synapse. It localises to the synaptosome. Its function is as follows. SNARE involved in vesicular transport from the late endosomes to the trans-Golgi network. This chain is Vesicle-associated membrane protein 3 (VAMP3), found in Bos taurus (Bovine).